A 770-amino-acid chain; its full sequence is Integrin beta-2 (770 aa).

The signal sequence occupies residues 1–22 (MLPQRPQLLLLAGLLSLQSVLS). Position 23 is a pyrrolidone carboxylic acid (glutamine 23). The Extracellular segment spans residues 23 to 701 (QECTKYKVST…DMLECVKGPN (679 aa)). In terms of domain architecture, PSI spans 24–74 (ECTKYKVSTCRDCIESGPSCAWCQKLNFTGQGEPDSTRCDTRAQLLSKGCP). 28 disulfide bridges follow: cysteine 25–cysteine 43, cysteine 33–cysteine 447, cysteine 36–cysteine 62, cysteine 46–cysteine 73, cysteine 191–cysteine 198, cysteine 246–cysteine 286, cysteine 386–cysteine 400, cysteine 420–cysteine 445, cysteine 449–cysteine 467, cysteine 459–cysteine 470, cysteine 472–cysteine 481, cysteine 483–cysteine 514, cysteine 497–cysteine 512, cysteine 506–cysteine 517, cysteine 519–cysteine 534, cysteine 536–cysteine 559, cysteine 541–cysteine 557, cysteine 549–cysteine 562, cysteine 564–cysteine 573, cysteine 575–cysteine 598, cysteine 582–cysteine 596, cysteine 590–cysteine 601, cysteine 603–cysteine 612, cysteine 615–cysteine 618, cysteine 622–cysteine 663, cysteine 628–cysteine 647, cysteine 631–cysteine 643, and cysteine 671–cysteine 696. N-linked (GlcNAc...) asparagine glycosylation is found at asparagine 50 and asparagine 116. In terms of domain architecture, VWFA spans 124–363 (GYPIDLYYLM…ELIKSAYNKL (240 aa)). Serine 136 and serine 138 together coordinate Mg(2+). Residues serine 138, aspartate 141, aspartate 142, and aspartate 173 each coordinate Ca(2+). 4 residues coordinate Ca(2+): asparagine 229, aspartate 231, proline 233, and glutamate 234. Glutamate 234 provides a ligand contact to Mg(2+). Asparagine 254 carries N-linked (GlcNAc...) asparagine glycosylation. Aspartate 264 and glutamate 347 together coordinate Ca(2+). The Cell attachment site signature appears at 397 to 399 (RGD). 4 consecutive I-EGF domains span residues 449–482 (CREASRDRGVCGGRGSMECGVCRCDAGYIGKNCE), 483–535 (CQTH…QFCE), 536–574 (CDNVNCERYDGQVCGGDKRGLCFCGACRCNDQYEGSACQ), and 575–613 (CLKSTQGCLNLNGVECSGRGRCRCNVCQCDPGYQPPLCI). N-linked (GlcNAc...) asparagine glycosylation occurs at asparagine 501. N-linked (GlcNAc...) asparagine glycosylation is present at asparagine 642. Residues 702 to 724 (IAAIVGGTVGGVVLVGILLLAIW) traverse the membrane as a helical segment. Residues 725–770 (KALTHLSDLREYHRFEKEKLKSQWNNDNPLFKSATTTVMNPKFAES) are Cytoplasmic-facing. Phosphoserine is present on residues serine 746 and serine 757. 2 positions are modified to phosphothreonine: threonine 759 and threonine 761.

Belongs to the integrin beta chain family. In terms of assembly, heterodimer of an alpha and a beta subunit. The ITGB2 beta subunit associates with the ITGAL, ITGAM, ITGAX or ITGAD alpha subunits. Found in a complex with CD177 and ITGAM/CD11b. Interacts with FGR. Interacts with COPS5 and RANBP9. Interacts with FLNA (via filamin repeats 4, 9, 12, 17, 19, 21, and 23). Interacts with THBD. In terms of processing, both Ser-746 and Ser-757 become phosphorylated when T-cells are exposed to phorbol esters. Phosphorylation on Thr-759 (but not on Ser-757) allows interaction with 14-3-3 proteins.

Its subcellular location is the cell membrane. The protein localises to the membrane raft. Integrin ITGAL/ITGB2 is a receptor for ICAM1, ICAM2, ICAM3 and ICAM4. Integrin ITGAL/ITGB2 is also a receptor for the secreted form of ubiquitin-like protein ISG15; the interaction is mediated by ITGAL. Integrins ITGAM/ITGB2 and ITGAX/ITGB2 are receptors for the iC3b fragment of the third complement component and for fibrinogen. Integrin ITGAX/ITGB2 recognizes the sequence G-P-R in fibrinogen alpha-chain. Integrin ITGAM/ITGB2 recognizes P1 and P2 peptides of fibrinogen gamma chain. Integrin ITGAM/ITGB2 is also a receptor for factor X. Integrin ITGAD/ITGB2 is a receptor for ICAM3 and VCAM1. Contributes to natural killer cell cytotoxicity. Involved in leukocyte adhesion and transmigration of leukocytes including T-cells and neutrophils. Triggers neutrophil transmigration during lung injury through PTK2B/PYK2-mediated activation. Integrin ITGAL/ITGB2 in association with ICAM3, contributes to apoptotic neutrophil phagocytosis by macrophages. In association with alpha subunit ITGAM/CD11b, required for CD177-PRTN3-mediated activation of TNF primed neutrophils. The chain is Integrin beta-2 (ITGB2) from Ovis canadensis (Bighorn sheep).